The chain runs to 1160 residues: Protein GIGANTEA (1160 aa).

The segment covering 158-169 has biased composition (polar residues); the sequence is CSSTSDQASSCE. 3 disordered regions span residues 158–188, 600–629, and 800–830; these read CSST…RKPL, GGSK…RNRC, and PVKK…SRSH. Residues 170-187 are compositionally biased toward basic and acidic residues; that stretch reads SMEKRANGSPRNEPDRKP. A compositionally biased stretch (basic and acidic residues) spans 801-812; that stretch reads VKKDEPPIEEKN.

It belongs to the GIGANTEA family.

It is found in the nucleus. Its function is as follows. Involved in regulation of circadian rhythm, and in the control of the photoperiodic flowering. Acts as a suppressor of flowering under short-day (SD) and long-day (LD) conditions. Activates Hd1/CONSTANS gene. In Oryza sativa subsp. japonica (Rice), this protein is Protein GIGANTEA (GI).